Reading from the N-terminus, the 334-residue chain is Putative carboxypeptidase VC_A0337 (334 aa).

Catalysis depends on serine 112, which acts as the Nucleophile. Catalysis depends on charge relay system residues glutamate 234 and histidine 302.

The protein belongs to the peptidase S66 family.

The protein is Putative carboxypeptidase VC_A0337 of Vibrio cholerae serotype O1 (strain ATCC 39315 / El Tor Inaba N16961).